The primary structure comprises 664 residues: Alpha-1,4-glucan:maltose-1-phosphate maltosyltransferase (664 aa).

3 residues coordinate alpha-maltose 1-phosphate: lysine 261, glutamine 321, and aspartate 356. Aspartate 393 serves as the catalytic Nucleophile. Asparagine 394 provides a ligand contact to alpha-maltose 1-phosphate. Glutamate 422 (proton donor) is an active-site residue. 533 to 534 (KY) contacts alpha-maltose 1-phosphate.

This sequence belongs to the glycosyl hydrolase 13 family. GlgE subfamily. Homodimer.

It carries out the reaction alpha-maltose 1-phosphate + [(1-&gt;4)-alpha-D-glucosyl](n) = [(1-&gt;4)-alpha-D-glucosyl](n+2) + phosphate. Functionally, maltosyltransferase that uses maltose 1-phosphate (M1P) as the sugar donor to elongate linear or branched alpha-(1-&gt;4)-glucans. Is involved in a branched alpha-glucan biosynthetic pathway from trehalose, together with TreS, Mak and GlgB. This chain is Alpha-1,4-glucan:maltose-1-phosphate maltosyltransferase, found in Pseudomonas aeruginosa (strain ATCC 15692 / DSM 22644 / CIP 104116 / JCM 14847 / LMG 12228 / 1C / PRS 101 / PAO1).